We begin with the raw amino-acid sequence, 147 residues long: Probable disulfide formation protein (147 aa).

A helical transmembrane segment spans residues asparagine 9–tyrosine 28. Cysteine 38 and cysteine 41 are disulfide-bonded. The next 2 membrane-spanning stretches (helical) occupy residues tyrosine 43 to threonine 62 and tyrosine 69 to leucine 86. Cysteine 99 and cysteine 106 form a disulfide bridge. Residues glycine 115–phenylalanine 138 form a helical membrane-spanning segment.

It belongs to the DsbB family. BdbC subfamily.

It is found in the cell inner membrane. Required for disulfide bond formation in some proteins. This Coxiella burnetii (strain CbuG_Q212) (Coxiella burnetii (strain Q212)) protein is Probable disulfide formation protein.